The following is a 191-amino-acid chain: Ubiquinol-cytochrome c reductase iron-sulfur subunit (191 aa).

The chain crosses the membrane as a helical span at residues 18–35; sequence ATAATGVVVTGAAVWPLI. In terms of domain architecture, Rieske spans 94–189; sequence RDTSAENANK…AAFVDETTIK (96 aa). Positions 95–116 are disordered; sequence DTSAENANKPGAEATDENRTLP. C133, H135, C153, and H156 together coordinate [2Fe-2S] cluster. A disulfide bridge connects residues C138 and C155.

Belongs to the Rieske iron-sulfur protein family. In terms of assembly, the main subunits of complex b-c1 are: cytochrome b, cytochrome c1 and the Rieske protein. Requires [2Fe-2S] cluster as cofactor.

Its subcellular location is the cell membrane. It carries out the reaction a quinol + 2 Fe(III)-[cytochrome c](out) = a quinone + 2 Fe(II)-[cytochrome c](out) + 2 H(+)(out). In terms of biological role, component of the ubiquinol-cytochrome c reductase complex (complex III or cytochrome b-c1 complex), which is a respiratory chain that generates an electrochemical potential coupled to ATP synthesis. This Rhodobacter capsulatus (strain ATCC BAA-309 / NBRC 16581 / SB1003) protein is Ubiquinol-cytochrome c reductase iron-sulfur subunit (petA).